Here is a 505-residue protein sequence, read N- to C-terminus: Adenylosuccinate synthetase, chloroplastic (505 aa).

The N-terminal 60 residues, 1 to 60 (MTTMNISTLRLDSNPITTSTKSTTHRSGALGYNGSYSCRLLQFQKKNKAPSIIVCSTKPL), are a transit peptide targeting the chloroplast. Residues 92 to 98 (GDEGKGK) and 120 to 122 (GHT) each bind GTP. Catalysis depends on D93, which acts as the Proton acceptor. Residues D93 and G120 each contribute to the Mg(2+) site. IMP is bound by residues 93–96 (DEGK), 118–121 (NAGH), T210, R224, Q304, T319, and R383. H121 (proton donor) is an active-site residue. 379 to 385 (TTTGRPR) is a binding site for substrate. Residues R385, 411 to 413 (KLD), and 494 to 496 (GVG) each bind GTP.

Belongs to the adenylosuccinate synthetase family. In terms of assembly, homodimer. The cofactor is Mg(2+).

The protein resides in the plastid. It is found in the chloroplast. It carries out the reaction IMP + L-aspartate + GTP = N(6)-(1,2-dicarboxyethyl)-AMP + GDP + phosphate + 2 H(+). It participates in purine metabolism; AMP biosynthesis via de novo pathway; AMP from IMP: step 1/2. Its function is as follows. Plays an important role in the de novo pathway and in the salvage pathway of purine nucleotide biosynthesis. Catalyzes the first committed step in the biosynthesis of AMP from IMP. The protein is Adenylosuccinate synthetase, chloroplastic of Nicotiana tabacum (Common tobacco).